The sequence spans 185 residues: Probable dehydrin LEA (185 aa).

Basic and acidic residues-rich tracts occupy residues 1–10 and 44–55; these read MADLRDEKGN and QHKESTTSDIAE. Positions 1-185 are disordered; that stretch reads MADLRDEKGN…LPGHHNHNHP (185 aa). Low complexity predominate over residues 67 to 94; the sequence is AAAPAGAGAATAATATGVSAGTGATTTG. A compositionally biased stretch (basic and acidic residues) spans 130 to 146; sequence KEKIKEKFGSGKHKDEQ. Low complexity predominate over residues 147–159; it reads TPATATTTGPATT. A compositionally biased stretch (basic and acidic residues) spans 161 to 177; the sequence is QPHEKKGILEKIKDKLP.

Belongs to the plant dehydrin family.

This is Probable dehydrin LEA (LEA) from Arabidopsis thaliana (Mouse-ear cress).